Consider the following 58-residue polypeptide: Glutathione reductase (58 aa).

Positions 5, 12, 13, and 21 each coordinate FAD. C13 and C18 are oxidised to a cystine.

It belongs to the class-I pyridine nucleotide-disulfide oxidoreductase family. Homodimer. It depends on FAD as a cofactor.

The protein resides in the cytoplasm. The enzyme catalyses 2 glutathione + NADP(+) = glutathione disulfide + NADPH + H(+). Functionally, catalyzes the reduction of glutathione disulfide (GSSG) to reduced glutathione (GSH). Constitutes the major mechanism to maintain a high GSH:GSSG ratio in the cytosol. This is Glutathione reductase from Spirulina sp.